We begin with the raw amino-acid sequence, 339 residues long: MVIQKNWQELIKPNKLEVAPGHDPKRIATVVAEPLERGFGTTLGNALRRVLLSSLQGAAVTSVHIDGVLHEFSSIPGVREDVTDIVLNIKTIAIRSSSDTPKRMTLRKTGPGLVTAGDISTIGDIQILNPDLVLCTLDEGAEIRMEFTVATGKGYVPADRNRPEDAPIGLIPVDALFSPVTKVSYRIENTREGQDLDKDKLTMTVETNGAVSPEDALAYAARIIQDQLQIFVNFEEPRKEEAAPLAPQLPFNPALLKKVDELELSVRSANCLKNDNIVYIGDLIQKTEAEMLRTPNFGRKSLNEIKEVLAAMGLHLGMDVPGWPPENIEDLAKRFEEHY.

The tract at residues 1–235 is alpha N-terminal domain (alpha-NTD); it reads MVIQKNWQEL…DQLQIFVNFE (235 aa). The alpha C-terminal domain (alpha-CTD) stretch occupies residues 251–339; it reads FNPALLKKVD…DLAKRFEEHY (89 aa).

This sequence belongs to the RNA polymerase alpha chain family. In terms of assembly, homodimer. The RNAP catalytic core consists of 2 alpha, 1 beta, 1 beta' and 1 omega subunit. When a sigma factor is associated with the core the holoenzyme is formed, which can initiate transcription.

It carries out the reaction RNA(n) + a ribonucleoside 5'-triphosphate = RNA(n+1) + diphosphate. DNA-dependent RNA polymerase catalyzes the transcription of DNA into RNA using the four ribonucleoside triphosphates as substrates. The chain is DNA-directed RNA polymerase subunit alpha from Methylobacterium nodulans (strain LMG 21967 / CNCM I-2342 / ORS 2060).